A 308-amino-acid polypeptide reads, in one-letter code: Ribosomal RNA small subunit methyltransferase H (308 aa).

Residues 36 to 38 (GGH), Asp-55, Phe-86, Asp-103, and Gln-110 each bind S-adenosyl-L-methionine.

Belongs to the methyltransferase superfamily. RsmH family.

Its subcellular location is the cytoplasm. The catalysed reaction is cytidine(1402) in 16S rRNA + S-adenosyl-L-methionine = N(4)-methylcytidine(1402) in 16S rRNA + S-adenosyl-L-homocysteine + H(+). Its function is as follows. Specifically methylates the N4 position of cytidine in position 1402 (C1402) of 16S rRNA. The sequence is that of Ribosomal RNA small subunit methyltransferase H from Helicobacter pylori (strain G27).